The primary structure comprises 105 residues: Heat shock protein HspQ (105 aa).

Belongs to the HspQ family.

The protein resides in the cytoplasm. Its function is as follows. Involved in the degradation of certain denaturated proteins, including DnaA, during heat shock stress. The protein is Heat shock protein HspQ of Escherichia fergusonii (strain ATCC 35469 / DSM 13698 / CCUG 18766 / IAM 14443 / JCM 21226 / LMG 7866 / NBRC 102419 / NCTC 12128 / CDC 0568-73).